The primary structure comprises 834 residues: ATP-dependent RNA helicase ddx23 (834 aa).

2 disordered regions span residues 1-245 and 322-371; these read MDPP…TQFS and FGGY…GKQI. A compositionally biased stretch (basic and acidic residues) spans 10–25; it reads SKRDTKKKDEVNKEQP. A compositionally biased stretch (polar residues) spans 42–54; sequence SNPTQEEPTNTLQ. Composition is skewed to basic and acidic residues over residues 70-110, 117-164, 171-205, and 231-245; these read GLKE…DYRD, GRDR…RRDG, RRRDERRENSGRRDYRDNDRRDDRRDNGRYGRDND, and DIHKDRIKRDTTQFS. The span at 328 to 362 shows a compositional bias: low complexity; that stretch reads NNNNNGNHYNGNIYNNNNNNNNNNNNNNNINNNNN. Positions 413-441 match the Q motif motif; the sequence is RTWQESNLPREILEAIRQLGYEKPSPIQM. The Helicase ATP-binding domain occupies 444-643; the sequence is IPISLTGRDI…KKYLRRPCTI (200 aa). 457 to 464 is a binding site for ATP; sequence AETGSGKT. The short motif at 570 to 573 is the DEAD box element; sequence DEAD. The Helicase C-terminal domain maps to 654–815; that stretch reads RIRQTVIFVK…IVPIELLKHP (162 aa). Residues 813-834 are disordered; the sequence is KHPSSQQKHGSSKDHNKSVIFK. Positions 823–834 are enriched in basic and acidic residues; the sequence is SSKDHNKSVIFK.

Belongs to the DEAD box helicase family. DDX23/PRP28 subfamily.

The protein resides in the cytoplasm. The protein localises to the nucleus. It catalyses the reaction ATP + H2O = ADP + phosphate + H(+). Functionally, probable ATP-dependent RNA helicase which may be involved in mRNA splicing. This chain is ATP-dependent RNA helicase ddx23 (helB2), found in Dictyostelium discoideum (Social amoeba).